We begin with the raw amino-acid sequence, 821 residues long: PX domain-containing protein C1450.12 (821 aa).

In terms of domain architecture, PX spans 171–310 (AYVLGVRQST…SFLTDDPVTL (140 aa)). The disordered stretch occupies residues 235-271 (KDDHDTYLNSSEDSTLSPLPSRSSDTNDPQSDSQHVL). Residues 241–268 (YLNSSEDSTLSPLPSRSSDTNDPQSDSQ) show a composition bias toward polar residues. Residues T260 and T597 each carry the phosphothreonine modification. Composition is skewed to acidic residues over residues 737–746 (GDEDDQDEND) and 754–766 (EHME…EEFD). The tract at residues 737–766 (GDEDDQDENDQVTKVEEEHMEDDDSVEEFD) is disordered. A Phosphoserine modification is found at S761.

The protein resides in the mitochondrion membrane. The chain is PX domain-containing protein C1450.12 from Schizosaccharomyces pombe (strain 972 / ATCC 24843) (Fission yeast).